Consider the following 756-residue polypeptide: U3 small nucleolar RNA-associated protein 25 homolog (756 aa).

The tract at residues 1-159 (MGKRGSRSQS…SQTSPEEFTD (159 aa)) is disordered. 2 promotes p53/TP53 degradation regions span residues 1-185 (MGKR…SLKA) and 573-635 (VQLP…KKEE). Phosphoserine is present on Ser-10. Positions 25 to 43 (RDFGEEHPFYDRVSRKEAK) are enriched in basic and acidic residues. Ser-50, Ser-52, Ser-58, Ser-60, Ser-62, and Ser-64 each carry phosphoserine. Acidic residues-rich tracts occupy residues 54-64 (DSSDSESDSES) and 84-121 (EEEE…EEMA). Residues 636 to 697 (LNFTHICEYT…YELPTYPHFY (62 aa)) are represses p53/TP53 degradation.

Belongs to the UTP25 family. As to quaternary structure, interacts with CAPN3; the interaction is required for CAPN3 translocation to the nucleolus. In terms of processing, phosphorylated. Phosphorylation is required to promote p53/TP53 degradation in the nucleolus which promotes cell cycle progression and liver development. In terms of tissue distribution, expressed in colon.

It localises to the nucleus. The protein localises to the nucleolus. Functionally, component of the ribosomal small subunit processome for the biogenesis of ribosomes, functions in pre-ribosomal RNA (pre-rRNA) processing. Essential for embryonic development in part through the regulation of p53 pathway. Controls the expansion growth of digestive organs and liver. Also involved in the sympathetic neuronal development. Mediates, with CAPN3, the proteasome-independent degradation of p53/TP53. This is U3 small nucleolar RNA-associated protein 25 homolog from Homo sapiens (Human).